The chain runs to 1264 residues: MSSSPSPFGQNEWLVEEMYRKFREDPSSVDPSWHEFLVDYNPEPTTDSSASENGQQTRTAAPKAPPEPAPAPAPKSQDSKSQAPKQDSKPQESKPQAKAKPAESKSSTKPADAKSEKSGKSGTNGAAKPAAQPADDSDQNQVLRGAAAAVAKNMSASLDVPTATSVRAIPAKLMIDNRVVINNHLKRTRGGKISFTHLIGYAIVAAVKKFPNMNRHFAEVDGKPNAVTPAHTNLGLAIDLQGKDGNRQLVVAAIKKADTMRFGQFIAAYEDIVRRARDGKLTAEDFSGVTISLTNPGTIGTVHSVPRLMRGQGAIIGVGAMEYPAEFQGASEERIADLGIGKLITLTSTYDHRIIQGAESGDFLRTVHQLLLSDDFFDEIFRELGIPYEPVRWRTDNPDSIEDKNARVIELIAAYRNRGHLMADIDPLRLDSNRFRSHPDLDVLTHGLTLWDLDREFKVNGFAGAERKKLRDVLAVLRDAYCRHIGVEYTHILEPEQQQWLQERIEGKHEKPTVAQQKYILSRLNAAEAFETFLQTKYVGQKRFSLEGAETVIPAMDAVIDQCAEHALDEVVIGMPHRGRLNVLANIVGKPYSQIFSEFEGNLNPSQAHGSGDVKYHLGSSGTYLQMFGDNDITVSLTANPSHLEAVDPVMEGLVRAKQDLLDKGDTEDGYTVVPLMLHGDAAFAGQGVVAETLNLALLRGYRTGGTIHLIVNNQIGFTTSPAAAKSSEYCTDVAKMIGAPIFHVNGDDPEAAVWVSRLAVDFRQKFKKDVVIDLLCYRRRGHNEGDDPSMTQPSMYDVIDTKRGVRKSYTEALIGRGDISMKEAEDALRDYQGQLEQVFNEVRELEKHEIEPSESVEADQQIPAKLATAVDKSLLARIGDAHLAVPEGFTVHPRVKPVLEKRREMAYEGKVDWAFAELLALGTMISEGKLVRLSGQDTRRGTFTQRHSVVIDRKTGKEFTPLQLLATDSDGNPTGGKFLVYDSPLSEFAAVGFEYGYSVGNPDAMVLWEAQFGDFINGAQSIIDEFISSGEAKWGQLSDVVLLLPHGHEGQGPDHTSGRIERFLQLWAEGSMTIALPSTPANYFHLLRRHSLDGIQRPLIVFTPKSMLRNKAAVSDIRDFTEQKFRSVLEEPTYTDGDGDRNKVTRILLTSGKIYYELVARKNKESRDDVAIVRIEQLAPLPKRRLAETLDKYPNVDEKFWVQEEPANQGAWPTFGLTLPEMLPDHFTGIKRISRRAMSAPSSGSSKVHAVEQQEILDEAFAP.

Residues 1 to 41 are 2-oxoglutarate dehydrogenase E1, N-terminal part; it reads MSSSPSPFGQNEWLVEEMYRKFREDPSSVDPSWHEFLVDYN. Over residues 23-37 the composition is skewed to basic and acidic residues; sequence REDPSSVDPSWHEFL. The segment at 23-140 is disordered; sequence REDPSSVDPS…AQPADDSDQN (118 aa). The linker stretch occupies residues 42–102; sequence PEPTTDSSAS…SKPQAKAKPA (61 aa). Residues 43 to 59 are compositionally biased toward polar residues; it reads EPTTDSSASENGQQTRT. Over residues 63–73 the composition is skewed to pro residues; it reads KAPPEPAPAPA. The segment at 103–373 is succinyltransferase E2; sequence ESKSSTKPAD…LRTVHQLLLS (271 aa). His352 functions as the Proton acceptor; for succinyltransferase activity in the catalytic mechanism. Residues 374–1264 form a 2-oxoglutarate dehydrogenase E1, C-terminal part region; sequence DDFFDEIFRE…QEILDEAFAP (891 aa). Arg578 contributes to the thiamine diphosphate binding site. 2 residues coordinate 2-oxoglutarate: His617 and Ser642. Thiamine diphosphate contacts are provided by Ser642, Leu644, Asp681, Ala682, Ala683, and Asn714. Asp681 contacts Mg(2+). Residues Asn714 and Ile716 each coordinate Mg(2+). Positions 819–850 form a coiled coil; sequence DISMKEAEDALRDYQGQLEQVFNEVRELEKHE. Position 1056 (His1056) interacts with 2-oxoglutarate. The acetyl-CoA site is built by Thr1074, Arg1090, Lys1125, Ser1128, Gln1178, Arg1185, and Arg1186.

Belongs to the 2-oxoacid dehydrogenase family. Kgd subfamily. As to quaternary structure, homodimer. The 2-oxoglutarate dehydrogenase (ODH) complex contains multiple copies of three enzymatic components: 2-oxoglutarate dehydrogenase (E1), dihydrolipoamide succinyltransferase (E2) and lipoamide dehydrogenase (E3). Mg(2+) serves as cofactor. Requires thiamine diphosphate as cofactor.

The enzyme catalyses glyoxylate + 2-oxoglutarate + H(+) = 2-hydroxy-3-oxoadipate + CO2. It catalyses the reaction 2-oxoglutarate + H(+) = succinate semialdehyde + CO2. The catalysed reaction is N(6)-[(R)-lipoyl]-L-lysyl-[protein] + 2-oxoglutarate + H(+) = N(6)-[(R)-S(8)-succinyldihydrolipoyl]-L-lysyl-[protein] + CO2. It carries out the reaction N(6)-[(R)-dihydrolipoyl]-L-lysyl-[protein] + succinyl-CoA = N(6)-[(R)-S(8)-succinyldihydrolipoyl]-L-lysyl-[protein] + CoA. It functions in the pathway carbohydrate metabolism; tricarboxylic acid cycle; succinate from 2-oxoglutarate (transferase route): step 1/2. Its pathway is carbohydrate metabolism; tricarboxylic acid cycle; succinyl-CoA from 2-oxoglutarate (dehydrogenase route): step 1/1. With respect to regulation, alpha-ketoglutarate dehydrogenase and decarboxylase activities are inhibited by unphosphorylated GarA, and allosterically activated by acetyl-CoA, the main substrate of the TCA cycle. In terms of biological role, shows three enzymatic activities that share a first common step, the attack of thiamine-PP on 2-oxoglutarate (alpha-ketoglutarate, KG), leading to the formation of an enamine-thiamine-PP intermediate upon decarboxylation. Thus, displays KGD activity, catalyzing the decarboxylation from five-carbon 2-oxoglutarate to four-carbon succinate semialdehyde (SSA). Also catalyzes C-C bond formation between the activated aldehyde formed after decarboxylation of alpha-ketoglutarate and the carbonyl of glyoxylate (GLX), to yield 2-hydroxy-3-oxoadipate (HOA), which spontaneously decarboxylates to form 5-hydroxylevulinate (HLA). And is also a component of the 2-oxoglutarate dehydrogenase (ODH) complex, that catalyzes the overall conversion of 2-oxoglutarate to succinyl-CoA and CO(2). The KG decarboxylase and KG dehydrogenase reactions provide two alternative, tightly regulated, pathways connecting the oxidative and reductive branches of the TCA cycle. This Mycobacterium sp. (strain JLS) protein is Multifunctional 2-oxoglutarate metabolism enzyme (kgd).